The following is a 626-amino-acid chain: Transketolase-like protein 2 (626 aa).

His-37 is a substrate binding site. Thiamine diphosphate-binding positions include Ser-40, His-77, and 123 to 125; that span reads GSL. Asp-155 is a Mg(2+) binding site. Gly-156 and Asn-185 together coordinate thiamine diphosphate. Positions 185 and 187 each coordinate Mg(2+). Positions 247 and 261 each coordinate thiamine diphosphate. Residues His-261 and Ser-348 each contribute to the substrate site. Residues Glu-369 and Phe-395 each contribute to the thiamine diphosphate site. Glu-369 serves as the catalytic Proton donor. Substrate-binding residues include His-419 and Asp-427. Thiamine diphosphate is bound at residue Gln-431. Residue Arg-477 coordinates substrate.

This sequence belongs to the transketolase family. In terms of assembly, homodimer. Requires Mg(2+) as cofactor. The cofactor is Ca(2+). It depends on Mn(2+) as a cofactor. Co(2+) is required as a cofactor. Thiamine diphosphate serves as cofactor.

The catalysed reaction is D-sedoheptulose 7-phosphate + D-glyceraldehyde 3-phosphate = aldehydo-D-ribose 5-phosphate + D-xylulose 5-phosphate. In terms of biological role, plays an essential role in total transketolase activity and cell proliferation in cancer cells; after transfection with anti-TKTL1 siRNA, total transketolase activity dramatically decreases and proliferation was significantly inhibited in cancer cells. Plays a pivotal role in carcinogenesis. This chain is Transketolase-like protein 2 (TKTL2), found in Bos taurus (Bovine).